Here is a 143-residue protein sequence, read N- to C-terminus: Envelope protein A28 homolog (143 aa).

A helical; Signal-anchor for type II membrane protein membrane pass occupies residues 1–21 (MNTVQILVVILITTALSFLVF). The Virion surface portion of the chain corresponds to 22 to 143 (QLWYYAENYE…LLRLLMANTS (122 aa)).

It belongs to the poxviridae A28 protein family. Post-translationally, contains two intramolecular disulfide bonds. They are created by the viral disulfide bond formation pathway, a poxvirus-specific pathway that operates on the cytoplasmic side of the MV membranes.

It is found in the virion membrane. Functionally, envelope protein required for virus entry into host cell and for cell-cell fusion (syncytium formation). This chain is Envelope protein A28 homolog, found in Amsacta (AmEPV).